The primary structure comprises 396 residues: Probable intron-encoded endonuclease aI3 (396 aa).

The segment at 51-90 is disordered; the sequence is TNNTNNNNPADSSSYESRMRAAGNSNSNSNSNSDSNINNT. Residues 74–90 are compositionally biased toward low complexity; sequence NSNSNSNSNSDSNINNT.

This sequence belongs to the LAGLIDADG endonuclease family.

It is found in the mitochondrion. Mitochondrial DNA endonuclease involved in intron homing. This Kluyveromyces lactis (strain ATCC 8585 / CBS 2359 / DSM 70799 / NBRC 1267 / NRRL Y-1140 / WM37) (Yeast) protein is Probable intron-encoded endonuclease aI3 (aI3).